A 512-amino-acid chain; its full sequence is MKRALVSVSDKQNLVPFVKGLVENGFEIISTGGTKRVLDEAGIETIGIEDVTHFPEILDGRVKTLNPYVHGGLLARRNLPEHMATLEKLNITPIDLVCVNLYPFKETIEKPGVEIADAIENIDIGGPSMVRSAAKNYHDVTIVVDQADYDEVLAQIKEDGETSLATRARLAAKAFRHTAAYDSLISQYLTKQTGLEDPEKLTLSWDLKETMRYGENSHQKAWLYEDALPKAFSVLQAKQLHGKKLSYNNIKDADEALRCIREFDEPTVVAMKHMNPCGIGRGDSLVQAWDRAYEADPVSIFGGVIALNRQVDLVTAEKMHKIFLEIVIAPGFDDDAFELLAKKKNIRLLTLDFSKKDEPTKHEVVSVMGGMLLQEQDMLKEDYHDWQCVTEKQPTEEQLKTLMFAWKAVKHAKSNAIVLANDERTLGVGEGQPNRIDSLKIAVKHAGEAIDDRTVMASDAFFPFGDCVEYAGQNGIKAIVQPGGSVRDQESIEMANKYGIAMVTTGIRHFRH.

The 144-residue stretch at 1 to 144 folds into the MGS-like domain; the sequence is MKRALVSVSD…KNYHDVTIVV (144 aa).

Belongs to the PurH family.

It catalyses the reaction (6R)-10-formyltetrahydrofolate + 5-amino-1-(5-phospho-beta-D-ribosyl)imidazole-4-carboxamide = 5-formamido-1-(5-phospho-D-ribosyl)imidazole-4-carboxamide + (6S)-5,6,7,8-tetrahydrofolate. The catalysed reaction is IMP + H2O = 5-formamido-1-(5-phospho-D-ribosyl)imidazole-4-carboxamide. It functions in the pathway purine metabolism; IMP biosynthesis via de novo pathway; 5-formamido-1-(5-phospho-D-ribosyl)imidazole-4-carboxamide from 5-amino-1-(5-phospho-D-ribosyl)imidazole-4-carboxamide (10-formyl THF route): step 1/1. The protein operates within purine metabolism; IMP biosynthesis via de novo pathway; IMP from 5-formamido-1-(5-phospho-D-ribosyl)imidazole-4-carboxamide: step 1/1. This chain is Bifunctional purine biosynthesis protein PurH, found in Limosilactobacillus reuteri (strain DSM 20016) (Lactobacillus reuteri).